Consider the following 552-residue polypeptide: HTH-type transcriptional regulator SgrR (552 aa).

Positions 163–493 are solute-binding; sequence ELKPDLAHHW…DDLDTDAQQW (331 aa).

Its function is as follows. Activates the small RNA gene sgrS under glucose-phosphate stress conditions as well as yfdZ. Represses its own transcription under both stress and non-stress conditions. Might act as a sensor of the intracellular accumulation of phosphoglucose by binding these molecules in its C-terminal solute-binding domain. This chain is HTH-type transcriptional regulator SgrR, found in Pectobacterium atrosepticum (strain SCRI 1043 / ATCC BAA-672) (Erwinia carotovora subsp. atroseptica).